Consider the following 198-residue polypeptide: Guanylate kinase (198 aa).

A Guanylate kinase-like domain is found at 8–188; that stretch reads GRVVVLSGPS…ACSELVSLLV (181 aa). ATP is bound at residue 15–22; the sequence is GPSAVGKS.

It belongs to the guanylate kinase family.

The protein resides in the cytoplasm. It catalyses the reaction GMP + ATP = GDP + ADP. Functionally, essential for recycling GMP and indirectly, cGMP. In Mycobacterium sp. (strain MCS), this protein is Guanylate kinase.